The sequence spans 380 residues: DNA replication and repair protein RecF (380 aa).

30–37 (GNNAQGKS) contributes to the ATP binding site.

Belongs to the RecF family.

It is found in the cytoplasm. In terms of biological role, the RecF protein is involved in DNA metabolism; it is required for DNA replication and normal SOS inducibility. RecF binds preferentially to single-stranded, linear DNA. It also seems to bind ATP. The chain is DNA replication and repair protein RecF from Crocosphaera subtropica (strain ATCC 51142 / BH68) (Cyanothece sp. (strain ATCC 51142)).